Here is a 479-residue protein sequence, read N- to C-terminus: Alliin lyase (479 aa).

Residues 1–25 (MESYDKVGSNKVPCLLILTCIIMSS) form the signal peptide. The propeptide occupies 26–34 (FVNNNIVQA). The 47-residue stretch at 47-93 (EAVANINCSGHGRAFLDGILSDGSPKCECNTCYTGADCSEKITGCSA) folds into the EGF-like; atypical domain. N-linked (GlcNAc...) asparagine glycosylation is present at asparagine 53. Intrachain disulfides connect cysteine 54–cysteine 73, cysteine 75–cysteine 84, and cysteine 78–cysteine 91. Chloride is bound at residue 126–134 (YFFNPVSNF). Residues asparagine 180 and asparagine 225 are each glycosylated (N-linked (GlcNAc...) asparagine). Lysine 285 carries the post-translational modification N6-(pyridoxal phosphate)lysine. N-linked (GlcNAc...) asparagine glycosylation is found at asparagine 342 and asparagine 362. Cysteine 402 and cysteine 410 are disulfide-bonded.

The protein belongs to the alliinase family. In terms of assembly, homodimer. Pyridoxal 5'-phosphate is required as a cofactor.

The protein resides in the vacuole. It carries out the reaction an S-alkyl-L-cysteine S-oxide = an S-alkyl sulfenate + 2-aminoprop-2-enoate. The sequence is that of Alliin lyase from Allium cepa (Onion).